The primary structure comprises 311 residues: Malate dehydrogenase (311 aa).

NAD(+) contacts are provided by residues Gly7–Gly12 and Asp32. Substrate is bound by residues Arg82 and Arg88. NAD(+) is bound by residues Asn95 and Val118–Asn120. Residues Asn120 and Arg151 each contribute to the substrate site. The active-site Proton acceptor is the His175.

The protein belongs to the LDH/MDH superfamily. MDH type 3 family. As to quaternary structure, homotetramer.

It catalyses the reaction (S)-malate + NAD(+) = oxaloacetate + NADH + H(+). With respect to regulation, strongly inhibited by iodoacetic acid and CuCl(2). Completely inhibited by N-ethylmaleimide and HgCl(2). Its function is as follows. Catalyzes the reversible oxidation of malate to oxaloacetate. Can use both NAD and NADP for malate oxidation, but NADPH cannot be used for oxaloacetate reduction. The polypeptide is Malate dehydrogenase (Flavobacterium frigidimaris).